Consider the following 140-residue polypeptide: Cytochrome b (140 aa).

Residues 38–58 (FFALHFLLPFVLAALVIMHLI) traverse the membrane as a helical segment. Heme b contacts are provided by H42 and H56. H61 is an a ubiquinone binding site. Residues 85 to 105 (FVFKDLVTIFIFFIVLSIFVF) form a helical membrane-spanning segment.

The protein belongs to the cytochrome b family. As to quaternary structure, fungal cytochrome b-c1 complex contains 10 subunits; 3 respiratory subunits, 2 core proteins and 5 low-molecular weight proteins. Cytochrome b-c1 complex is a homodimer. It depends on heme b as a cofactor.

Its subcellular location is the mitochondrion inner membrane. In terms of biological role, component of the ubiquinol-cytochrome c reductase complex (complex III or cytochrome b-c1 complex) that is part of the mitochondrial respiratory chain. The b-c1 complex mediates electron transfer from ubiquinol to cytochrome c. Contributes to the generation of a proton gradient across the mitochondrial membrane that is then used for ATP synthesis. This Aspergillus terreus protein is Cytochrome b (cob).